A 257-amino-acid polypeptide reads, in one-letter code: Putative transcription factor R430 (257 aa).

Disordered stretches follow at residues 1–35 (MEKF…DNNS) and 58–77 (SLKS…PNKS). The segment covering 7–25 (TDNTTDNTTDNTTDNTTDN) has biased composition (low complexity). Residues 26–35 (TTDKLTDNNS) are compositionally biased toward basic and acidic residues.

It belongs to the nucleo-cytoplasmic large DNA viruses (NCLDVs) VLTF-3 family.

Putative transcription factor. The polypeptide is Putative transcription factor R430 (Acanthamoeba polyphaga (Amoeba)).